A 1016-amino-acid polypeptide reads, in one-letter code: Nonsense-mediated mRNA decay factor SMG5 (1016 aa).

Position 2 is an N-acetylserine (Ser-2). A phosphoserine mark is found at Ser-2 and Ser-423. Disordered stretches follow at residues 408 to 561 (NPVP…PSEA) and 594 to 637 (PTTN…RSCR). The segment covering 449–466 (KSRKFSRLSCLRRRRHPP) has biased composition (basic residues). The segment covering 594 to 603 (PTTNPHTSAS) has biased composition (polar residues). Residues 619 to 628 (ASEEGSESEG) show a composition bias toward acidic residues. The stretch at 798 to 841 (QSEQESLLQQAQAQFRMAQEEARRNRLMRDMAQLRLQLEVSQLE) forms a coiled coil. The PINc domain occupies 872-995 (RQLATSGRFI…GPMQAALQAA (124 aa)).

In terms of assembly, interacts with TERT, PPP2CA and SMG1. Part of a complex that contains SMG1, SMG5, SMG7, PPP2CA, a short isoform of UPF3A (isoform UPF3AS, but not isoform UPF3AL) and phosphorylated UPF1. Not detected in complexes that contain unphosphorylated UPF1. Ubiquitous.

The protein resides in the cytoplasm. It localises to the nucleus. Its function is as follows. Plays a role in nonsense-mediated mRNA decay. Does not have RNase activity by itself. Promotes dephosphorylation of UPF1. Together with SMG7 is thought to provide a link to the mRNA degradation machinery involving exonucleolytic pathways, and to serve as an adapter for UPF1 to protein phosphatase 2A (PP2A), thereby triggering UPF1 dephosphorylation. Necessary for TERT activity. The chain is Nonsense-mediated mRNA decay factor SMG5 from Homo sapiens (Human).